The sequence spans 62 residues: Calmodulin regulator protein PCP4 (62 aa).

The interval 1–40 is disordered; it reads MSERQGAGTTNGKDKPSGENDGQKKVQEEFDIDMDAPETE. A compositionally biased stretch (basic and acidic residues) spans 12 to 28; it reads GKDKPSGENDGQKKVQE. The acidic; binds calcium and is required for modulating the calcium-binding kinetics of calmodulin stretch occupies residues 28-40; sequence EEFDIDMDAPETE. Residues 39–62 enclose the IQ domain; it reads TERAAVAIQSQFRKFQKKKAGSQS.

Belongs to the PCP4 family. Binds to both calcium-free and calcium-bound calmodulin. The affinity for the calcium-bound form is 50-fold greater.

Functions as a modulator of calcium-binding by calmodulin. Thereby, regulates calmodulin activity and the different processes it controls. For instance, may play a role in neuronal differentiation through activation of calmodulin-dependent kinase signaling pathways. The protein is Calmodulin regulator protein PCP4 of Bos taurus (Bovine).